A 245-amino-acid polypeptide reads, in one-letter code: Thiopurine S-methyltransferase (245 aa).

Ser14 bears the Phosphoserine mark. 29 to 40 lines the S-adenosyl-L-methionine pocket; it reads WQDKWVNGKTAF. Residue Phe40 coordinates substrate. Lys58 carries the post-translational modification N6-acetyllysine. Residues Leu69, Glu90, 134–135, and Arg152 contribute to the S-adenosyl-L-methionine site; that span reads SI.

It belongs to the class I-like SAM-binding methyltransferase superfamily. TPMT family. As to quaternary structure, monomer.

The protein resides in the cytoplasm. The catalysed reaction is S-adenosyl-L-methionine + a thiopurine = S-adenosyl-L-homocysteine + a thiopurine S-methylether.. The enzyme catalyses mercaptopurine + S-adenosyl-L-methionine = 6-methylthiopurine + S-adenosyl-L-homocysteine + H(+). It catalyses the reaction 6-thioguanine + S-adenosyl-L-methionine = 6-methylthioguanine + S-adenosyl-L-homocysteine + H(+). Inhibited by S-adenosyl-L-homocysteine (SAH). Catalyzes the S-methylation of thiopurine drugs such as 6-mercaptopurine (also called mercaptopurine, 6-MP or its brand name Purinethol) and 6-thioguanine (also called tioguanine or 6-TG) using S-adenosyl-L-methionine as the methyl donor. TPMT activity modulates the cytotoxic effects of thiopurine prodrugs. A natural substrate for this enzyme has yet to be identified. In Homo sapiens (Human), this protein is Thiopurine S-methyltransferase (TPMT).